Reading from the N-terminus, the 428-residue chain is Phosphomethylpyrimidine synthase 2 (428 aa).

Substrate is bound by residues Met-94, Tyr-123, His-162, 184–186 (SRG), 225–228 (NGMR), and Glu-264. His-268 provides a ligand contact to Zn(2+). Tyr-291 serves as a coordination point for substrate. His-332 provides a ligand contact to Zn(2+). [4Fe-4S] cluster-binding residues include Cys-408, Cys-411, and Cys-415.

This sequence belongs to the ThiC family. The cofactor is [4Fe-4S] cluster.

The enzyme catalyses 5-amino-1-(5-phospho-beta-D-ribosyl)imidazole + S-adenosyl-L-methionine = 4-amino-2-methyl-5-(phosphooxymethyl)pyrimidine + CO + 5'-deoxyadenosine + formate + L-methionine + 3 H(+). The protein operates within cofactor biosynthesis; thiamine diphosphate biosynthesis. Functionally, catalyzes the synthesis of the hydroxymethylpyrimidine phosphate (HMP-P) moiety of thiamine from aminoimidazole ribotide (AIR) in a radical S-adenosyl-L-methionine (SAM)-dependent reaction. In Methanosarcina mazei (strain ATCC BAA-159 / DSM 3647 / Goe1 / Go1 / JCM 11833 / OCM 88) (Methanosarcina frisia), this protein is Phosphomethylpyrimidine synthase 2.